The chain runs to 124 residues: Fluoride-specific ion channel FluC 1 (124 aa).

4 helical membrane-spanning segments follow: residues 7–27, 32–52, 58–78, and 93–113; these read IQSKQLYKIFLLIVGSILGAI, LNNYFWVNISGAALLGLIVGL, IQFFLVIGFCGSFTTFSGWIL, and AGLICSNLLGGFTALSVTFWI. Na(+) contacts are provided by G68 and T71.

It belongs to the fluoride channel Fluc/FEX (TC 1.A.43) family.

The protein resides in the cell inner membrane. It carries out the reaction fluoride(in) = fluoride(out). Its activity is regulated as follows. Na(+) is not transported, but it plays an essential structural role and its presence is essential for fluoride channel function. Functionally, fluoride-specific ion channel. Important for reducing fluoride concentration in the cell, thus reducing its toxicity. The protein is Fluoride-specific ion channel FluC 1 of Prochlorococcus marinus (strain SARG / CCMP1375 / SS120).